The following is a 530-amino-acid chain: Cytochrome P450 78A6 (530 aa).

The helical transmembrane segment at 25-45 (LAFSLLAVTIIWLAISLFLWT) threads the bilayer. Position 474 (cysteine 474) interacts with heme.

This sequence belongs to the cytochrome P450 family. The cofactor is heme. Expressed in leaves, sepals, petals, stamens, carpels and developing ovules.

The protein resides in the membrane. Functionally, plays a role in seed and fruit development. Functions probably in association with CYP78A9 in the regulation of seed growth. Acts maternally to promote seed growth. The protein is Cytochrome P450 78A6 (CYP78A6) of Arabidopsis thaliana (Mouse-ear cress).